The primary structure comprises 725 residues: Fatty acid oxidation complex subunit alpha (725 aa).

Residues 1-189 are enoyl-CoA hydratase/isomerase; that stretch reads MLYKGDTLYL…KIGLVDGVVK (189 aa). Residue Asp296 coordinates substrate. The interval 311-725 is 3-hydroxyacyl-CoA dehydrogenase; it reads ETPKQAAVLG…RLNQPVRLVL (415 aa). NAD(+) is bound by residues Met324, Asp343, 400 to 402, Lys407, and Ser429; that span reads VVE. The active-site For 3-hydroxyacyl-CoA dehydrogenase activity is the His450. Asn453 is an NAD(+) binding site. Positions 500 and 660 each coordinate substrate.

It in the N-terminal section; belongs to the enoyl-CoA hydratase/isomerase family. This sequence in the C-terminal section; belongs to the 3-hydroxyacyl-CoA dehydrogenase family. Heterotetramer of two alpha chains (FadB) and two beta chains (FadA).

The catalysed reaction is a (3S)-3-hydroxyacyl-CoA + NAD(+) = a 3-oxoacyl-CoA + NADH + H(+). The enzyme catalyses a (3S)-3-hydroxyacyl-CoA = a (2E)-enoyl-CoA + H2O. It carries out the reaction a 4-saturated-(3S)-3-hydroxyacyl-CoA = a (3E)-enoyl-CoA + H2O. It catalyses the reaction (3S)-3-hydroxybutanoyl-CoA = (3R)-3-hydroxybutanoyl-CoA. The catalysed reaction is a (3Z)-enoyl-CoA = a 4-saturated (2E)-enoyl-CoA. The enzyme catalyses a (3E)-enoyl-CoA = a 4-saturated (2E)-enoyl-CoA. It participates in lipid metabolism; fatty acid beta-oxidation. Functionally, involved in the aerobic and anaerobic degradation of long-chain fatty acids via beta-oxidation cycle. Catalyzes the formation of 3-oxoacyl-CoA from enoyl-CoA via L-3-hydroxyacyl-CoA. It can also use D-3-hydroxyacyl-CoA and cis-3-enoyl-CoA as substrate. The sequence is that of Fatty acid oxidation complex subunit alpha from Salmonella paratyphi A (strain ATCC 9150 / SARB42).